The chain runs to 480 residues: Probable glycosyltransferase 2 (480 aa).

Residues 1–21 show a composition bias toward gly residues; the sequence is MGQEGMGYNNGKGGGGGGGGL. The interval 1–45 is disordered; sequence MGQEGMGYNNGKGGGGGGGGLPMTAPRPRGASPLSSHGHHHRSRK. Residues 1 to 49 lie on the Cytoplasmic side of the membrane; it reads MGQEGMGYNNGKGGGGGGGGLPMTAPRPRGASPLSSHGHHHRSRKIHRT. The chain crosses the membrane as a helical; Signal-anchor for type II membrane protein span at residues 50-72; sequence FNNVKITVLCGLVTILVLRGTIG. The Lumenal segment spans residues 73–480; it reads LNLSLPNQPT…DVKAKISTTS (408 aa). Asn-74, Asn-124, Asn-129, and Asn-458 each carry an N-linked (GlcNAc...) asparagine glycan.

It belongs to the glycosyltransferase 34 family.

The protein localises to the golgi apparatus membrane. In terms of biological role, probable glycosyltransferase that may be involved in the biosynthesis of xyloglucan. This chain is Probable glycosyltransferase 2, found in Oryza sativa subsp. indica (Rice).